Consider the following 216-residue polypeptide: Pyrophosphatase PpaX (216 aa).

Asp-9 functions as the Nucleophile in the catalytic mechanism.

It belongs to the HAD-like hydrolase superfamily. PpaX family. Mg(2+) is required as a cofactor.

It carries out the reaction diphosphate + H2O = 2 phosphate + H(+). Functionally, hydrolyzes pyrophosphate formed during P-Ser-HPr dephosphorylation by HPrK/P. Might play a role in controlling the intracellular pyrophosphate pool. This chain is Pyrophosphatase PpaX, found in Bacillus anthracis (strain A0248).